Consider the following 669-residue polypeptide: DNA ligase (669 aa).

NAD(+) contacts are provided by residues 34-38 (DAEYD), 83-84 (SL), and glutamate 114. The active-site N6-AMP-lysine intermediate is the lysine 116. NAD(+) is bound by residues arginine 137, glutamate 171, lysine 287, and lysine 311. Positions 405, 408, 423, and 428 each coordinate Zn(2+). One can recognise a BRCT domain in the interval 591 to 669 (NVESYFAGKT…EERFLQELNK (79 aa)).

It belongs to the NAD-dependent DNA ligase family. LigA subfamily. Mg(2+) serves as cofactor. It depends on Mn(2+) as a cofactor.

It catalyses the reaction NAD(+) + (deoxyribonucleotide)n-3'-hydroxyl + 5'-phospho-(deoxyribonucleotide)m = (deoxyribonucleotide)n+m + AMP + beta-nicotinamide D-nucleotide.. Functionally, DNA ligase that catalyzes the formation of phosphodiester linkages between 5'-phosphoryl and 3'-hydroxyl groups in double-stranded DNA using NAD as a coenzyme and as the energy source for the reaction. It is essential for DNA replication and repair of damaged DNA. The protein is DNA ligase of Bacillus cereus (strain 03BB102).